An 86-amino-acid chain; its full sequence is Small ribosomal subunit protein bS16 (86 aa).

It belongs to the bacterial ribosomal protein bS16 family.

The polypeptide is Small ribosomal subunit protein bS16 (Carboxydothermus hydrogenoformans (strain ATCC BAA-161 / DSM 6008 / Z-2901)).